The following is a 338-amino-acid chain: Methionyl-tRNA formyltransferase (338 aa).

Ser-110–Pro-113 serves as a coordination point for (6S)-5,6,7,8-tetrahydrofolate.

Belongs to the Fmt family.

The catalysed reaction is L-methionyl-tRNA(fMet) + (6R)-10-formyltetrahydrofolate = N-formyl-L-methionyl-tRNA(fMet) + (6S)-5,6,7,8-tetrahydrofolate + H(+). Attaches a formyl group to the free amino group of methionyl-tRNA(fMet). The formyl group appears to play a dual role in the initiator identity of N-formylmethionyl-tRNA by promoting its recognition by IF2 and preventing the misappropriation of this tRNA by the elongation apparatus. The sequence is that of Methionyl-tRNA formyltransferase from Synechococcus sp. (strain CC9902).